Consider the following 464-residue polypeptide: NADH dehydrogenase [ubiquinone] flavoprotein 1, mitochondrial (464 aa).

The transit peptide at 1–20 directs the protein to the mitochondrion; that stretch reads MLAARRLLGWSLPARVSVRF. Residue K81 is modified to N6-acetyllysine; alternate. Position 81 is an N6-succinyllysine; alternate (K81). 87 to 96 serves as a coordination point for NADH; that stretch reads GRGGAGFPTG. K104 is subject to N6-acetyllysine. FMN is bound at residue 199-247; the sequence is RGAGAYICGEETALIESIEGKQGKPRLKPPFPADVGVFGCPTTVANVET. At R257 the chain carries Omega-N-methylarginine. K375 carries the post-translational modification N6-acetyllysine. 4 residues coordinate [4Fe-4S] cluster: C379, C382, C385, and C425.

The protein belongs to the complex I 51 kDa subunit family. In terms of assembly, core subunit of respiratory chain NADH dehydrogenase (Complex I) which is composed of 45 different subunits. This is a component of the flavoprotein-sulfur (FP) fragment of the enzyme. Interacts with RAB5IF. Requires FMN as cofactor. It depends on [4Fe-4S] cluster as a cofactor.

The protein resides in the mitochondrion inner membrane. The catalysed reaction is a ubiquinone + NADH + 5 H(+)(in) = a ubiquinol + NAD(+) + 4 H(+)(out). Its function is as follows. Core subunit of the mitochondrial membrane respiratory chain NADH dehydrogenase (Complex I) which catalyzes electron transfer from NADH through the respiratory chain, using ubiquinone as an electron acceptor. Part of the peripheral arm of the enzyme, where the electrons from NADH are accepted by flavin mononucleotide (FMN) and then passed along a chain of iron-sulfur clusters by electron tunnelling to the final acceptor ubiquinone. Contains FMN, which is the initial electron acceptor as well as one iron-sulfur cluster. The sequence is that of NADH dehydrogenase [ubiquinone] flavoprotein 1, mitochondrial from Pongo pygmaeus (Bornean orangutan).